Here is a 551-residue protein sequence, read N- to C-terminus: CTP synthase (551 aa).

The amidoligase domain stretch occupies residues 1 to 273 (MKNTTNTKRT…DSKILELLNI (273 aa)). Serine 21 is a binding site for CTP. A UTP-binding site is contributed by serine 21. ATP is bound by residues 22-27 (SLGKGL) and aspartate 79. Residues aspartate 79 and glutamate 147 each coordinate Mg(2+). CTP is bound by residues 154–156 (DIE), 194–199 (KTKPTQ), and lysine 230. UTP contacts are provided by residues 194-199 (KTKPTQ) and lysine 230. The Glutamine amidotransferase type-1 domain maps to 298-551 (TIAITGKYVD…ISAAVANKKG (254 aa)). Glycine 360 lines the L-glutamine pocket. The active-site Nucleophile; for glutamine hydrolysis is the cysteine 387. L-glutamine is bound by residues 388–391 (LGMQ), glutamate 411, and arginine 479. Residues histidine 524 and glutamate 526 contribute to the active site.

It belongs to the CTP synthase family. In terms of assembly, homotetramer.

It carries out the reaction UTP + L-glutamine + ATP + H2O = CTP + L-glutamate + ADP + phosphate + 2 H(+). It catalyses the reaction L-glutamine + H2O = L-glutamate + NH4(+). The enzyme catalyses UTP + NH4(+) + ATP = CTP + ADP + phosphate + 2 H(+). Its pathway is pyrimidine metabolism; CTP biosynthesis via de novo pathway; CTP from UDP: step 2/2. Allosterically activated by GTP, when glutamine is the substrate; GTP has no effect on the reaction when ammonia is the substrate. The allosteric effector GTP functions by stabilizing the protein conformation that binds the tetrahedral intermediate(s) formed during glutamine hydrolysis. Inhibited by the product CTP, via allosteric rather than competitive inhibition. In terms of biological role, catalyzes the ATP-dependent amination of UTP to CTP with either L-glutamine or ammonia as the source of nitrogen. Regulates intracellular CTP levels through interactions with the four ribonucleotide triphosphates. The chain is CTP synthase from Desulfotalea psychrophila (strain LSv54 / DSM 12343).